Consider the following 225-residue polypeptide: Membrane protein (225 aa).

Residues 1 to 20 (MSNETNCTLDFEQSVELFKE) are Virion surface-facing. A helical membrane pass occupies residues 21 to 41 (YNLFITAFLLFLTIILQYGYA). Over 42–51 (TRSKFIYILK) the chain is Intravirion. Residues 52-72 (MIVLWCFWPLNIAVGVISCIY) traverse the membrane as a helical segment. The Virion surface segment spans residues 73–77 (PPNTG). A helical membrane pass occupies residues 78-98 (GLVAAIILTVFACLSFVGYWI). Residues 99–225 (QSIRLFKRCR…VATGGSSLYT (127 aa)) lie on the Intravirion side of the membrane.

Belongs to the gammacoronaviruses M protein family. Homomultimer. Interacts with envelope E protein in the budding compartment of the host cell, which is located between endoplasmic reticulum and the Golgi complex. Forms a complex with HE and S proteins. Interacts with nucleocapsid N protein. This interaction probably participates in RNA packaging into the virus.

The protein resides in the virion membrane. The protein localises to the host Golgi apparatus membrane. Its function is as follows. Component of the viral envelope that plays a central role in virus morphogenesis and assembly via its interactions with other viral proteins. The chain is Membrane protein from Gallus gallus (Chicken).